Consider the following 352-residue polypeptide: Outer membrane protein assembly factor BamC (352 aa).

The signal sequence occupies residues 1-24 (MAISLQKSTVVKVVGVSLVMLLAA). The N-palmitoyl cysteine moiety is linked to residue C25. C25 carries S-diacylglycerol cysteine lipidation.

It belongs to the BamC family. Part of the Bam complex, which is composed of the outer membrane protein BamA, and four lipoproteins BamB, BamC, BamD and BamE.

It localises to the cell outer membrane. Part of the outer membrane protein assembly complex, which is involved in assembly and insertion of beta-barrel proteins into the outer membrane. In Yersinia pestis, this protein is Outer membrane protein assembly factor BamC.